A 626-amino-acid chain; its full sequence is uncharacterized protein (626 aa).

Residues 103 to 123 form a helical membrane-spanning segment; that stretch reads AGALLVKFFPLLLLYPLTYLA. The Protein kinase domain occupies 200–618; the sequence is FENREPVGSG…DILEAARPFL (419 aa). ATP is bound by residues 206-214 and K311; that span reads VGSGCVAQV. D445 functions as the Proton acceptor in the catalytic mechanism.

The protein belongs to the protein kinase superfamily. ADCK protein kinase family.

It localises to the mitochondrion. The protein localises to the membrane. Functionally, the function of this protein is not yet clear. It is not known if it has protein kinase activity and what type of substrate it would phosphorylate (Ser, Thr or Tyr). Involved in the mitochondrial import of CoQ precursors, plays a role in muscle mitochondrial function and fatty acid beta-oxidation. This is an uncharacterized protein from Homo sapiens (Human).